A 66-amino-acid polypeptide reads, in one-letter code: uncharacterized protein (66 aa).

It to M.jannaschii MJ0582.

This is an uncharacterized protein from Methanocaldococcus jannaschii (strain ATCC 43067 / DSM 2661 / JAL-1 / JCM 10045 / NBRC 100440) (Methanococcus jannaschii).